Reading from the N-terminus, the 228-residue chain is Ribosomal RNA small subunit methyltransferase G (228 aa).

S-adenosyl-L-methionine contacts are provided by residues glycine 70, alanine 121–glutamate 122, and arginine 138.

The protein belongs to the methyltransferase superfamily. RNA methyltransferase RsmG family.

It is found in the cytoplasm. Functionally, specifically methylates the N7 position of a guanine in 16S rRNA. This Thermotoga petrophila (strain ATCC BAA-488 / DSM 13995 / JCM 10881 / RKU-1) protein is Ribosomal RNA small subunit methyltransferase G.